We begin with the raw amino-acid sequence, 261 residues long: Short-chain-enoyl-CoA hydratase (261 aa).

E114 acts as the Nucleophile in catalysis. Residue E134 is the Proton acceptor of the active site.

It belongs to the enoyl-CoA hydratase/isomerase family. In terms of assembly, homotetramer.

The catalysed reaction is a short-chain (3S)-3-hydroxyacyl-CoA = a short-chain (2E)-enoyl-CoA + H2O. It participates in lipid metabolism; butanoate metabolism. Functionally, catalyzes the reversible hydration of crotonyl-CoA. Can also use hexenoyl-CoA but not higher analogs. The protein is Short-chain-enoyl-CoA hydratase (crt) of Clostridium acetobutylicum (strain ATCC 824 / DSM 792 / JCM 1419 / IAM 19013 / LMG 5710 / NBRC 13948 / NRRL B-527 / VKM B-1787 / 2291 / W).